A 1024-amino-acid polypeptide reads, in one-letter code: Importin-8 (1024 aa).

The region spanning 22 to 102 (AENELNQSYK…RENMVEAIIR (81 aa)) is the Importin N-terminal domain. The disordered stretch occupies residues 896–969 (FGRAQGSEEE…YSTPLDCDNG (74 aa)). Composition is skewed to acidic residues over residues 902 to 917 (SEEE…EDEV) and 934 to 952 (DNED…DEGL).

The protein belongs to the importin beta family.

It localises to the cytoplasm. The protein resides in the nucleus. Involved in nuclear protein import, either by acting as autonomous nuclear transport receptor or as an adapter-like protein in association with the importin-beta subunit KPNB1. Acting autonomously, may serve as receptor for nuclear localization signals (NLS) and promote translocation of import substrates through the nuclear pore complex (NPC) by an energy requiring, Ran-dependent mechanism. At the nucleoplasmic side of the NPC, Ran binds to importin, the importin/substrate complex dissociates and importin is re-exported from the nucleus to the cytoplasm where GTP hydrolysis releases Ran. The directionality of nuclear import is thought to be conferred by an asymmetric distribution of the GTP- and GDP-bound forms of Ran between the cytoplasm and nucleus. In vitro mediates the nuclear import of the signal recognition particle protein SRP19. May also be involved in cytoplasm-to-nucleus shuttling of a broad spectrum of other cargos, including Argonaute-microRNAs complexes, the JUN protein, RELA/NF-kappa-B p65 subunit, the translation initiation factor EIF4E and a set of receptor-activated mothers against decapentaplegic homolog (SMAD) transcription factors that play a critical role downstream of the large family of transforming growth factor beta and bone morphogenetic protein (BMP) cytokines. This is Importin-8 (ipo8) from Danio rerio (Zebrafish).